Reading from the N-terminus, the 443-residue chain is Aklavinone 7-beta-L-rhodosaminyltransferase (443 aa).

The signal sequence occupies residues 1–23 (MRVLLTSFALDAHFNGSVPLAWA).

It belongs to the glycosyltransferase 28 family.

The catalysed reaction is dTDP-beta-L-rhodosamine + aklavinone = aclacinomycin T + dTDP + 2 H(+). With respect to regulation, the activity of AknS is substantially increased by the addition of the accessory protein AknT. In terms of biological role, involved in the biosynthesis of the anthracycline antitumor agent aclacinomycin A. Catalyzes the transfer of the proximal deoxyhexose, L-rhodosamine, from dTDP-beta-L-rhodosamine to the C7-OH of aklavinone aglycone to yield aclacinomycin T (rhodosaminyl-aklavinone). It can also use dTDP-2-deoxy-beta-L-fucose, TDP-2-deoxyfucose, dTDP-4-amino-2-deoxyrhamnose, TDP-L-rhodosamine as sugar donor and epsilon-rhodomycinone as sugar acceptor. This is Aklavinone 7-beta-L-rhodosaminyltransferase from Streptomyces galilaeus.